A 205-amino-acid polypeptide reads, in one-letter code: dITP/XTP pyrophosphatase (205 aa).

11-16 (TKNMGK) lines the substrate pocket. Positions 44 and 73 each coordinate Mg(2+). D73 serves as the catalytic Proton acceptor. Residues S74, 158 to 161 (FGYD), K181, and 186 to 187 (HR) contribute to the substrate site.

Belongs to the HAM1 NTPase family. Homodimer. Mg(2+) is required as a cofactor.

It carries out the reaction XTP + H2O = XMP + diphosphate + H(+). It catalyses the reaction dITP + H2O = dIMP + diphosphate + H(+). The catalysed reaction is ITP + H2O = IMP + diphosphate + H(+). Functionally, pyrophosphatase that catalyzes the hydrolysis of nucleoside triphosphates to their monophosphate derivatives, with a high preference for the non-canonical purine nucleotides XTP (xanthosine triphosphate), dITP (deoxyinosine triphosphate) and ITP. Seems to function as a house-cleaning enzyme that removes non-canonical purine nucleotides from the nucleotide pool, thus preventing their incorporation into DNA/RNA and avoiding chromosomal lesions. The sequence is that of dITP/XTP pyrophosphatase from Bacillus thuringiensis subsp. konkukian (strain 97-27).